Here is a 259-residue protein sequence, read N- to C-terminus: Protein unc-50 homolog (259 aa).

The segment covering 1-15 (MLPTSSPQIHRNGSL) has biased composition (polar residues). The interval 1-22 (MLPTSSPQIHRNGSLSERDAAR) is disordered. The Cytoplasmic portion of the chain corresponds to 1 to 80 (MLPTSSPQIH…TKDQWARDDP (80 aa)). A helical membrane pass occupies residues 81–101 (AFLVLLSIWLCVSTVGFGLVL). Topologically, residues 102 to 110 (DMGFVETLT) are lumenal. A helical membrane pass occupies residues 111 to 131 (LLLWVVFIDCIGVGLLISTLM). The Cytoplasmic segment spans residues 132–162 (WFVTNKYLMKHPNRDYDVEWGYAFDVHLNAF). A helical membrane pass occupies residues 163–183 (YPLLVILHFLQLFFINHVVVI). Topologically, residues 184–198 (SSDWFLGYFVGNTMW) are lumenal. The helical transmembrane segment at 199–219 (LIAIGYYVYITFLGYSALPFL) threads the bilayer. At 220–222 (KNT) the chain is on the cytoplasmic side. A helical transmembrane segment spans residues 223–243 (VVLLYPFALLGLLYVLSISLG). The Lumenal segment spans residues 244 to 259 (WNFTKGLCWFYKHRVQ).

It belongs to the unc-50 family.

The protein resides in the nucleus inner membrane. The protein localises to the golgi apparatus membrane. Functionally, involved in the cell surface expression of neuronal nicotinic receptors. Binds RNA. The chain is Protein unc-50 homolog (unc50) from Danio rerio (Zebrafish).